Here is a 268-residue protein sequence, read N- to C-terminus: Phosphatidylglycerol--prolipoprotein diacylglyceryl transferase (268 aa).

7 consecutive transmembrane segments (helical) span residues 23-43 (IGLRWYGLMYLLGFVFARWLA), 62-82 (LLFNGFMGVFIGGRVGDVFFY), 97-117 (VWEGGMSFHGGLIGVIVAMIW), 132-152 (FVAPLIPFGLGLGRIGNFINL), 179-199 (SQLYEAFLEGLVLFAILNIFI), 206-226 (ASVAGLFLIGYGVFRFIVEYV), and 241-261 (GQALCLPMIIGGAFIMAWAYS). R145 contributes to the a 1,2-diacyl-sn-glycero-3-phospho-(1'-sn-glycerol) binding site.

Belongs to the Lgt family.

It localises to the cell inner membrane. It catalyses the reaction L-cysteinyl-[prolipoprotein] + a 1,2-diacyl-sn-glycero-3-phospho-(1'-sn-glycerol) = an S-1,2-diacyl-sn-glyceryl-L-cysteinyl-[prolipoprotein] + sn-glycerol 1-phosphate + H(+). Its pathway is protein modification; lipoprotein biosynthesis (diacylglyceryl transfer). In terms of biological role, catalyzes the transfer of the diacylglyceryl group from phosphatidylglycerol to the sulfhydryl group of the N-terminal cysteine of a prolipoprotein, the first step in the formation of mature lipoproteins. The chain is Phosphatidylglycerol--prolipoprotein diacylglyceryl transferase from Haemophilus influenzae (strain 86-028NP).